A 380-amino-acid polypeptide reads, in one-letter code: Erythronate-4-phosphate dehydrogenase (380 aa).

Substrate is bound by residues Ser-45 and Thr-66. NAD(+) is bound by residues 126–127, Asp-146, Thr-175, 206–208, and Asp-232; these read QV and ASR. Arg-208 is a catalytic residue. The active site involves Glu-237. His-254 acts as the Proton donor in catalysis. An NAD(+)-binding site is contributed by Gly-257. Tyr-258 is a binding site for substrate.

It belongs to the D-isomer specific 2-hydroxyacid dehydrogenase family. PdxB subfamily. In terms of assembly, homodimer.

The protein localises to the cytoplasm. The enzyme catalyses 4-phospho-D-erythronate + NAD(+) = (R)-3-hydroxy-2-oxo-4-phosphooxybutanoate + NADH + H(+). The protein operates within cofactor biosynthesis; pyridoxine 5'-phosphate biosynthesis; pyridoxine 5'-phosphate from D-erythrose 4-phosphate: step 2/5. Its function is as follows. Catalyzes the oxidation of erythronate-4-phosphate to 3-hydroxy-2-oxo-4-phosphonooxybutanoate. The polypeptide is Erythronate-4-phosphate dehydrogenase (Pseudomonas aeruginosa (strain UCBPP-PA14)).